A 440-amino-acid polypeptide reads, in one-letter code: Exodeoxyribonuclease 7 large subunit (440 aa).

It belongs to the XseA family. As to quaternary structure, heterooligomer composed of large and small subunits.

The protein localises to the cytoplasm. The enzyme catalyses Exonucleolytic cleavage in either 5'- to 3'- or 3'- to 5'-direction to yield nucleoside 5'-phosphates.. Bidirectionally degrades single-stranded DNA into large acid-insoluble oligonucleotides, which are then degraded further into small acid-soluble oligonucleotides. This Ralstonia nicotianae (strain ATCC BAA-1114 / GMI1000) (Ralstonia solanacearum) protein is Exodeoxyribonuclease 7 large subunit.